Reading from the N-terminus, the 179-residue chain is ATP synthase subunit delta (179 aa).

This sequence belongs to the ATPase delta chain family. F-type ATPases have 2 components, F(1) - the catalytic core - and F(0) - the membrane proton channel. F(1) has five subunits: alpha(3), beta(3), gamma(1), delta(1), epsilon(1). F(0) has three main subunits: a(1), b(2) and c(10-14). The alpha and beta chains form an alternating ring which encloses part of the gamma chain. F(1) is attached to F(0) by a central stalk formed by the gamma and epsilon chains, while a peripheral stalk is formed by the delta and b chains.

The protein localises to the cell inner membrane. F(1)F(0) ATP synthase produces ATP from ADP in the presence of a proton or sodium gradient. F-type ATPases consist of two structural domains, F(1) containing the extramembraneous catalytic core and F(0) containing the membrane proton channel, linked together by a central stalk and a peripheral stalk. During catalysis, ATP synthesis in the catalytic domain of F(1) is coupled via a rotary mechanism of the central stalk subunits to proton translocation. In terms of biological role, this protein is part of the stalk that links CF(0) to CF(1). It either transmits conformational changes from CF(0) to CF(1) or is implicated in proton conduction. The protein is ATP synthase subunit delta of Anaeromyxobacter dehalogenans (strain 2CP-C).